The sequence spans 190 residues: Xanthine phosphoribosyltransferase (190 aa).

The xanthine site is built by Leu20 and Asn27. Position 129 to 133 (129 to 133 (ANGAA)) interacts with 5-phospho-alpha-D-ribose 1-diphosphate. Lys157 provides a ligand contact to xanthine.

It belongs to the purine/pyrimidine phosphoribosyltransferase family. Xpt subfamily. In terms of assembly, homodimer.

It is found in the cytoplasm. It carries out the reaction XMP + diphosphate = xanthine + 5-phospho-alpha-D-ribose 1-diphosphate. Its pathway is purine metabolism; XMP biosynthesis via salvage pathway; XMP from xanthine: step 1/1. Converts the preformed base xanthine, a product of nucleic acid breakdown, to xanthosine 5'-monophosphate (XMP), so it can be reused for RNA or DNA synthesis. This is Xanthine phosphoribosyltransferase from Laribacter hongkongensis (strain HLHK9).